The sequence spans 227 residues: ATP synthase subunit a (227 aa).

The next 5 membrane-spanning stretches (helical) occupy residues Ala16–Ile36, Leu79–Phe99, Ser105–Ile125, Leu176–Leu196, and Val202–Ile222.

It belongs to the ATPase A chain family. As to quaternary structure, F-type ATPases have 2 components, CF(1) - the catalytic core - and CF(0) - the membrane proton channel. CF(1) has five subunits: alpha(3), beta(3), gamma(1), delta(1), epsilon(1). CF(0) has three main subunits: a(1), b(2) and c(9-12). The alpha and beta chains form an alternating ring which encloses part of the gamma chain. CF(1) is attached to CF(0) by a central stalk formed by the gamma and epsilon chains, while a peripheral stalk is formed by the delta and b chains.

It is found in the cell inner membrane. Its function is as follows. Key component of the proton channel; it plays a direct role in the translocation of protons across the membrane. The polypeptide is ATP synthase subunit a (Campylobacter concisus (strain 13826)).